Reading from the N-terminus, the 122-residue chain is Ribosome-binding factor A (122 aa).

Belongs to the RbfA family. Monomer. Binds 30S ribosomal subunits, but not 50S ribosomal subunits or 70S ribosomes.

The protein localises to the cytoplasm. One of several proteins that assist in the late maturation steps of the functional core of the 30S ribosomal subunit. Associates with free 30S ribosomal subunits (but not with 30S subunits that are part of 70S ribosomes or polysomes). Required for efficient processing of 16S rRNA. May interact with the 5'-terminal helix region of 16S rRNA. The polypeptide is Ribosome-binding factor A (Polaromonas sp. (strain JS666 / ATCC BAA-500)).